Reading from the N-terminus, the 351-residue chain is Biotin synthase (351 aa).

The Radical SAM core domain occupies 44–262 (NRVQVSTLLS…LAVARILMPQ (219 aa)). [4Fe-4S] cluster-binding residues include Cys59, Cys63, and Cys66. The [2Fe-2S] cluster site is built by Cys103, Cys134, Cys194, and Arg266.

It belongs to the radical SAM superfamily. Biotin synthase family. In terms of assembly, homodimer. It depends on [4Fe-4S] cluster as a cofactor. [2Fe-2S] cluster serves as cofactor.

It carries out the reaction (4R,5S)-dethiobiotin + (sulfur carrier)-SH + 2 reduced [2Fe-2S]-[ferredoxin] + 2 S-adenosyl-L-methionine = (sulfur carrier)-H + biotin + 2 5'-deoxyadenosine + 2 L-methionine + 2 oxidized [2Fe-2S]-[ferredoxin]. The protein operates within cofactor biosynthesis; biotin biosynthesis; biotin from 7,8-diaminononanoate: step 2/2. In terms of biological role, catalyzes the conversion of dethiobiotin (DTB) to biotin by the insertion of a sulfur atom into dethiobiotin via a radical-based mechanism. The sequence is that of Biotin synthase from Pseudomonas fluorescens (strain Pf0-1).